Consider the following 256-residue polypeptide: Myb family transcription factor MPH1 (256 aa).

The region spanning 14 to 74 is the HTH myb-type domain; sequence RSEVPRMRWT…HLQMYRSGSS (61 aa). A DNA-binding region (H-T-H motif) is located at residues 45 to 70; it reads PKRILQLMGVKGVSISHIKSHLQMYR.

Highly expressed in the pulvinus and stem nodes. Expressed in the plumule of germinating seeds, coleoptile, leaves, internodes, leave sheaths, spikes and roots.

The protein localises to the nucleus. Probable transcription factor involved in the regulation of plant height by elongating internode cell length. Involved in the positive regulation of grain yield. May be involved in the regulation of genes related to cell elongation and cell wall synthesis, which are associated with plant height and yield phenotypes. Plays a role in tolerance to cadmium stress. This chain is Myb family transcription factor MPH1, found in Oryza sativa subsp. japonica (Rice).